Reading from the N-terminus, the 568-residue chain is TNF receptor-associated factor 3 (568 aa).

The tract at residues 1-28 (MESSKKMDSPGALQTNPPLKLHTDRSAG) is disordered. Ser9 carries the post-translational modification Phosphoserine. A Glycyl cysteine thioester (Cys-Gly) (interchain with G-Cter in ubiquitin) cross-link involves residue Cys56. The segment at 68 to 77 (CGHRFCESCM) adopts an RING-type zinc-finger fold. A Glycyl cysteine thioester (Cys-Gly) (interchain with G-Cter in ubiquitin) cross-link involves residue Cys124. TRAF-type zinc fingers lie at residues 135–190 (VHLK…IALQ) and 191–249 (KHED…QQIK). Lys168 participates in a covalent cross-link: Glycyl lysine isopeptide (Lys-Gly) (interchain with G-Cter in ubiquitin). Residues 267-338 (SNSLEKKVSL…KLKELDKEIR (72 aa)) adopt a coiled-coil conformation. Residue Lys329 forms a Glycyl lysine isopeptide (Lys-Gly) (interchain with G-Cter in ubiquitin) linkage. Residues 392–415 (LSVHDIRLADMDLRFQVLETASYN) are (Microbial infection) Interaction with glycoprotein N of Andes and New York hantaviruses. Positions 415-560 (NGVLIWKIRD…DDTIFIKVIV (146 aa)) constitute an MATH domain.

Belongs to the TNF receptor-associated factor family. A subfamily. As to quaternary structure, homotrimer. Heterotrimer with TRAF2 and TRAF5. Interacts with LTBR/TNFRSF3, TNFRSF4, TNFRSF5/CD40, TNFRSF8/CD30, TNFRSF13C TNFRSF17/BCMA, TLR4 and EDAR. Interacts with MAP3K5, MAP3K14, TRAIP/TRIP, TDP2/TTRAP, TANK/ITRAF and TRAF3IP1. Interaction with TNFRSF5/CD40 is modulated by TANK/ITRAF, which competes for the same binding site. Interacts with TICAM1. Interacts with TRAFD1. Interacts with OTUB1, OTUB2 and OTUD5. Interacts with RNF216, OPTN and TBK1. Identified in a complex with TRAF2, MAP3K14 and BIRC3. Interacts with BIRC2 and BIRC3. Upon exposure to bacterial lipopolysaccharide (LPS), recruited to a transient complex containing TLR4, TRAF3, TRAF6, IKBKG, MAP3K7, MYD88, TICAM1, BIRC2, BIRC3 and UBE2N. Interacts (via RING-type zinc finger domain) with SRC. Interacts with CARD14. Interacts (via MATH domain) with PTPN22; the interaction promotes TRAF3 polyubiquitination. Interacts with MAVS. Directly interacts with DDX3X; this interaction stimulates TRAF3 'Lys-63' ubiquitination. Interacts with IRF3. Interacts with IKBKE in the course of Sendai virus infection. Interacts with TRIM35. Interacts with GAPDH; promoting TRAF3 ubiquitination. Interacts with PPP3CA and PPP3CB. Interacts with ATP1B1; promoting TRAF3 ubiquitination. Interacts with RALGDS. Interacts with FBXO11. In terms of assembly, (Microbial infection) Interacts (via N-terminus) with New York hantavirus glycoprotein N (via C-terminus); this interaction inhibits the formation of TRAF3-TBK1 complexes. (Microbial infection) Interacts with Andes hantavirus glycoprotein N (via C-terminus); this interaction inhibits the formation of TRAF3-TBK1 complexes. As to quaternary structure, (Microbial infection) Interacts with Tula hantavirus glycoprotein N (via C-terminus); this interaction inhibits the formation of TRAF3-TBK1 complexes. In terms of assembly, (Microbial infection) Interacts with Epstein-Barr virus protein LMP1. Post-translationally, undergoes 'Lys-48'-linked polyubiquitination, leading to its proteasomal degradation in response to signaling by TNFSF13B, TLR4 or through CD40. 'Lys-48'-linked polyubiquitinated form is deubiquitinated by OTUD7B, preventing TRAF3 proteolysis and over-activation of non-canonical NF-kappa-B. Undergoes 'Lys-63'-linked ubiquitination during early stages of virus infection, and 'Lys-48'-linked ubiquitination during later stages. Undergoes both 'Lys-48'-linked and 'Lys-63'-linked ubiquitination in response to TLR3 and TLR4 signaling. 'Lys-63'-linked ubiquitination can be mediated by TRIM35. Deubiquitinated by OTUB1, OTUB2 and OTUD5. Undergoes 'Lys-63'-linked deubiquitination by MYSM1 to terminate the pattern-recognition receptors/PRRs pathways. Also undergoes 'Lys-29'-linked ubiquitination on Cys-56 and Cys-124 by NEDD4L; leading to increased 'Lys-48'- and 'Lys-63'-linked ubiquitination as well as increased binding to TBK1. TLR4 signals emanating from bacteria containing vesicles trigger 'Lys-33'-linked polyubiquitination that promotes the assembly of the exocyst complex thereby connecting innate immune signaling to the cellular trafficking apparatus. Deubiquitinated by USP25 during viral infection, leading to TRAF3 stabilization and type I interferon production. Ubiquitinated at Lys-329 by the SCF(FBXL2) complex, leading to its degradation by the proteasome. 'Lys-63'-linked ubiquitination by FBXO11 in a NEDD8-dependent manner promotes the amplification of IFN-I signaling. In terms of processing, (Microbial infection) Cleaved by enterovirus D68 protease 2A; leading to inhibition of NF-kappa-B or IFN-beta triggered by TRAF3.

Its subcellular location is the cytoplasm. It is found in the endosome. It localises to the mitochondrion. It catalyses the reaction S-ubiquitinyl-[E2 ubiquitin-conjugating enzyme]-L-cysteine + [acceptor protein]-L-lysine = [E2 ubiquitin-conjugating enzyme]-L-cysteine + N(6)-ubiquitinyl-[acceptor protein]-L-lysine.. Functionally, cytoplasmic E3 ubiquitin ligase that regulates various signaling pathways, such as the NF-kappa-B, mitogen-activated protein kinase (MAPK) and interferon regulatory factor (IRF) pathways, and thus controls a lot of biological processes in both immune and non-immune cell types. In TLR and RLR signaling pathways, acts as an E3 ubiquitin ligase promoting the synthesis of 'Lys-63'-linked polyubiquitin chains on several substrates such as ASC that lead to the activation of the type I interferon response or the inflammasome. Following the activation of certain TLRs such as TLR4, acts as a negative NF-kappa-B regulator, possibly to avoid unregulated inflammatory response, and its degradation via 'Lys-48'-linked polyubiquitination is required for MAPK activation and production of inflammatory cytokines. Alternatively, when TLR4 orchestrates bacterial expulsion, TRAF3 undergoes 'Lys-33'-linked polyubiquitination and subsequently binds to RALGDS, mobilizing the exocyst complex to rapidly expel intracellular bacteria back for clearance. Also acts as a constitutive negative regulator of the alternative NF-kappa-B pathway, which controls B-cell survival and lymphoid organ development. Required for normal antibody isotype switching from IgM to IgG. Plays a role T-cell dependent immune responses. Down-regulates proteolytic processing of NFKB2, and thereby inhibits non-canonical activation of NF-kappa-B. Promotes ubiquitination and proteasomal degradation of MAP3K14. The protein is TNF receptor-associated factor 3 of Homo sapiens (Human).